The sequence spans 141 residues: Putative 8-oxo-dGTP diphosphatase 2 (141 aa).

In terms of domain architecture, Nudix hydrolase spans 2–131 (LNQIVVAGAI…WIADLARTLN (130 aa)). The Mg(2+) site is built by Gly37, Glu52, Glu55, and Glu56. The short motif at 37 to 58 (GKVAAGETERAALARELAEELG) is the Nudix box element.

The protein belongs to the Nudix hydrolase family. Mg(2+) is required as a cofactor. The cofactor is Mn(2+).

The enzyme catalyses 8-oxo-dGTP + H2O = 8-oxo-dGMP + diphosphate + H(+). In terms of biological role, may be involved in the GO system responsible for removing an oxidatively damaged form of guanine (7,8-dihydro-8-oxoguanine, 8-oxo-dGTP) from DNA and the nucleotide pool. 8-oxo-dGTP is inserted opposite dA and dC residues of template DNA with almost equal efficiency thus leading to A.T to G.C transversions. MutT specifically degrades 8-oxo-dGTP to the monophosphate. In Mycobacterium tuberculosis (strain CDC 1551 / Oshkosh), this protein is Putative 8-oxo-dGTP diphosphatase 2 (mutT2).